We begin with the raw amino-acid sequence, 65 residues long: Conotoxin Lp5.1 (65 aa).

A signal peptide spans 1-22 (MRCVPVFIILLLLIPSAPSVDA). Residues 23-50 (QRKTKDDVPLASFHDNAKRTLKRLWNKR) constitute a propeptide that is removed on maturation.

It belongs to the conotoxin T superfamily. In terms of processing, contains 2 disulfide bonds that can be either 'C1-C3, C2-C4' or 'C1-C4, C2-C3', since these disulfide connectivities have been observed for conotoxins with cysteine framework V (for examples, see AC P0DQQ7 and AC P81755). Expressed by the venom duct.

The protein resides in the secreted. This is Conotoxin Lp5.1 from Conus leopardus (Leopard cone).